Here is a 140-residue protein sequence, read N- to C-terminus: MGGGERYNIPDPQSRNASKNQEQQNRQKSKDQNSSQTKIAHKKKERGHGYNPAAAAWQAMQNGGKTKSLSNNSNWNAGLSSPSLLFKSQASQNYAGAKFSEPPSPSVLPKPPSHWVHVSLNPSDKETMTFQLKTLLKVQV.

Positions 1–81 are disordered; it reads MGGGERYNIP…NSNWNAGLSS (81 aa). Polar residues-rich tracts occupy residues 11–38 and 59–81; these read DPQS…SQTK and AMQN…GLSS. An SH3-binding motif is present at residues 100 to 106; it reads SEPPSPS.

The protein belongs to the PNRC family. PNRC2 subfamily. In terms of assembly, interacts with UPF1/RENT1; preferentially interacts with hyperphosphorylated form. Interacts with DCP1A. Interacts with many nuclear receptors including ESR1, ESRRA, ESRRG, NR3C1/GR, NR5A1, PGR, TR, RAR and RXR. In terms of tissue distribution, strong expression is detected in lung, spleen, ovary, thymus, and colon.

The protein localises to the nucleus. The protein resides in the cytoplasm. It localises to the P-body. In terms of biological role, involved in nonsense-mediated mRNA decay (NMD) by acting as a bridge between the mRNA decapping complex and the NMD machinery. May act by targeting the NMD machinery to the P-body and recruiting the decapping machinery to aberrant mRNAs. Required for UPF1/RENT1 localization to the P-body. Plays a role in glucocorticoid receptor-mediated mRNA degradation by interacting with the glucocorticoid receptor NR3C1 in a ligand-dependent manner when it is bound to the 5' UTR of target mRNAs and recruiting the RNA helicase UPF1 and the mRNA-decapping enzyme DCP1A, leading to RNA decay. Also acts as a nuclear receptor coactivator. May play a role in controlling the energy balance between energy storage and energy expenditure. The polypeptide is Proline-rich nuclear receptor coactivator 2 (Pnrc2) (Mus musculus (Mouse)).